We begin with the raw amino-acid sequence, 286 residues long: Prohibitin-2, mitochondrial (286 aa).

Residues methionine 1–proline 13 lie on the Mitochondrial matrix side of the membrane. Residues alanine 14–leucine 32 form a helical; Signal-anchor for type II membrane protein membrane-spanning segment. The Mitochondrial intermembrane segment spans residues threonine 33 to lysine 286. Positions lysine 186 to alanine 219 form a coiled coil.

It belongs to the prohibitin family. As to quaternary structure, component of a prohibitin multimeric complex in mitochondrial membranes. Mostly expressed in proliferative tissues, including vasculature, shoot and root apical tissues.

The protein resides in the mitochondrion inner membrane. Its function is as follows. Prohibitin probably acts as a holdase/unfoldase for the stabilization of newly synthesized mitochondrial proteins. The polypeptide is Prohibitin-2, mitochondrial (PHB2) (Arabidopsis thaliana (Mouse-ear cress)).